Consider the following 58-residue polypeptide: Small ribosomal subunit protein bS21C (58 aa).

The disordered stretch occupies residues 38 to 58; that stretch reads YEKPSLRRKRKAEAARKGGRY. The span at 49–58 shows a compositional bias: basic and acidic residues; it reads AEAARKGGRY.

The protein belongs to the bacterial ribosomal protein bS21 family.

The sequence is that of Small ribosomal subunit protein bS21C (rpsU3) from Nostoc sp. (strain PCC 7120 / SAG 25.82 / UTEX 2576).